Consider the following 952-residue polypeptide: Inactive atromentin synthetase invA6 (952 aa).

The tract at residues 58 to 462 (DSSVQTRSFS…NGRIKDTVIV (405 aa)) is adenylation (A) domain. The Carrier domain occupies 594-672 (APSTETEKTL…SLAKYVDSLV (79 aa)). Residues 599–669 (TEKTLGRLYA…VISSLAKYVD (71 aa)) form a thiolation and peptide carrier (T) domain region. The residue at position 631 (Ser-631) is an O-(pantetheine 4'-phosphoryl)serine. The thioesterase (TE) domain stretch occupies residues 695–939 (PIFMVHPGIG…LMDFDHVSGF (245 aa)).

This sequence belongs to the ATP-dependent AMP-binding enzyme family.

Functionally, inactive atromentin synthetase homolog. Does not accept 4-hydroxyphenylpyruvate (4-HPP) as substrate. Both the adenylation (A) and the thioesterase (TE) domain of the invA6 enzyme are inactive. This is Inactive atromentin synthetase invA6 (invA6) from Paxillus involutus (Naked brimcap).